Consider the following 135-residue polypeptide: 6-pyruvoyl tetrahydrobiopterin synthase (135 aa).

Position 17 (histidine 17) interacts with Zn(2+). The active-site Proton acceptor is cysteine 36. The Zn(2+) site is built by histidine 40 and histidine 42. Catalysis depends on charge relay system residues histidine 81 and glutamate 124.

It belongs to the PTPS family. As to quaternary structure, homohexamer formed of two homotrimers in a head to head fashion. Zn(2+) serves as cofactor.

The enzyme catalyses 7,8-dihydroneopterin 3'-triphosphate = 6-pyruvoyl-5,6,7,8-tetrahydropterin + triphosphate + H(+). It participates in cofactor biosynthesis; tetrahydrobiopterin biosynthesis; tetrahydrobiopterin from 7,8-dihydroneopterin triphosphate: step 1/3. Involved in the biosynthesis of tetrahydrobiopterin, an essential cofactor of aromatic amino acid hydroxylases. Catalyzes the transformation of 7,8-dihydroneopterin triphosphate into 6-pyruvoyl tetrahydropterin. The polypeptide is 6-pyruvoyl tetrahydrobiopterin synthase (ptsA) (Dictyostelium discoideum (Social amoeba)).